The primary structure comprises 230 residues: Ribose-5-phosphate isomerase A (230 aa).

Substrate is bound by residues 31 to 34 (TGST), 88 to 91 (DGSD), and 101 to 104 (KGGG). Glu110 functions as the Proton acceptor in the catalytic mechanism. Lys128 provides a ligand contact to substrate.

It belongs to the ribose 5-phosphate isomerase family. In terms of assembly, homodimer.

The catalysed reaction is aldehydo-D-ribose 5-phosphate = D-ribulose 5-phosphate. It functions in the pathway carbohydrate degradation; pentose phosphate pathway; D-ribose 5-phosphate from D-ribulose 5-phosphate (non-oxidative stage): step 1/1. Functionally, catalyzes the reversible conversion of ribose-5-phosphate to ribulose 5-phosphate. This Lactobacillus acidophilus (strain ATCC 700396 / NCK56 / N2 / NCFM) protein is Ribose-5-phosphate isomerase A.